Here is a 443-residue protein sequence, read N- to C-terminus: UDP-N-acetylmuramate--L-alanine ligase (443 aa).

Residue 110–116 (GAHGKTS) coordinates ATP.

This sequence belongs to the MurCDEF family.

The protein localises to the cytoplasm. The enzyme catalyses UDP-N-acetyl-alpha-D-muramate + L-alanine + ATP = UDP-N-acetyl-alpha-D-muramoyl-L-alanine + ADP + phosphate + H(+). It participates in cell wall biogenesis; peptidoglycan biosynthesis. Cell wall formation. This chain is UDP-N-acetylmuramate--L-alanine ligase, found in Lactococcus lactis subsp. cremoris (strain MG1363).